The following is a 371-amino-acid chain: UDP-N-acetylglucosamine--N-acetylmuramyl-(pentapeptide) pyrophosphoryl-undecaprenol N-acetylglucosamine transferase (371 aa).

Residues Thr-15–Gly-17, Asn-126, Arg-172, Ser-199, Ile-256, Ala-275–Glu-280, and Gln-301 each bind UDP-N-acetyl-alpha-D-glucosamine.

This sequence belongs to the glycosyltransferase 28 family. MurG subfamily.

The protein resides in the cell inner membrane. The enzyme catalyses di-trans,octa-cis-undecaprenyl diphospho-N-acetyl-alpha-D-muramoyl-L-alanyl-D-glutamyl-meso-2,6-diaminopimeloyl-D-alanyl-D-alanine + UDP-N-acetyl-alpha-D-glucosamine = di-trans,octa-cis-undecaprenyl diphospho-[N-acetyl-alpha-D-glucosaminyl-(1-&gt;4)]-N-acetyl-alpha-D-muramoyl-L-alanyl-D-glutamyl-meso-2,6-diaminopimeloyl-D-alanyl-D-alanine + UDP + H(+). The protein operates within cell wall biogenesis; peptidoglycan biosynthesis. Its function is as follows. Cell wall formation. Catalyzes the transfer of a GlcNAc subunit on undecaprenyl-pyrophosphoryl-MurNAc-pentapeptide (lipid intermediate I) to form undecaprenyl-pyrophosphoryl-MurNAc-(pentapeptide)GlcNAc (lipid intermediate II). This Francisella tularensis subsp. mediasiatica (strain FSC147) protein is UDP-N-acetylglucosamine--N-acetylmuramyl-(pentapeptide) pyrophosphoryl-undecaprenol N-acetylglucosamine transferase.